A 430-amino-acid chain; its full sequence is UDP-N-acetylglucosamine 1-carboxyvinyltransferase (430 aa).

22-23 (KN) contributes to the phosphoenolpyruvate binding site. Arginine 102 lines the UDP-N-acetyl-alpha-D-glucosamine pocket. Residue cysteine 126 is the Proton donor of the active site. Cysteine 126 carries the post-translational modification 2-(S-cysteinyl)pyruvic acid O-phosphothioketal. UDP-N-acetyl-alpha-D-glucosamine is bound by residues 131–135 (RPVDL), 172–175 (KVSV), aspartate 317, and isoleucine 339.

It belongs to the EPSP synthase family. MurA subfamily.

It is found in the cytoplasm. It carries out the reaction phosphoenolpyruvate + UDP-N-acetyl-alpha-D-glucosamine = UDP-N-acetyl-3-O-(1-carboxyvinyl)-alpha-D-glucosamine + phosphate. It participates in cell wall biogenesis; peptidoglycan biosynthesis. Cell wall formation. Adds enolpyruvyl to UDP-N-acetylglucosamine. In Rhizobium johnstonii (strain DSM 114642 / LMG 32736 / 3841) (Rhizobium leguminosarum bv. viciae), this protein is UDP-N-acetylglucosamine 1-carboxyvinyltransferase.